The following is a 422-amino-acid chain: Testin (422 aa).

Positions 92-199 (MILTSPVAAK…GDVKLPKEVE (108 aa)) constitute a PET domain. The segment at 135–165 (QPVAGSEGAQYRKKQLAKQLPAHDQDPSKCH) is disordered. Over residues 155–165 (PAHDQDPSKCH) the composition is skewed to basic and acidic residues. LIM zinc-binding domains are found at residues 234 to 299 (YYCF…SEKP), 300 to 359 (RCAG…NHAV), and 360 to 422 (SCQG…KMSS).

The protein belongs to the prickle / espinas / testin family.

Its subcellular location is the cytoplasm. The protein localises to the cell cortex. The protein resides in the cell junction. It is found in the focal adhesion. In terms of biological role, scaffold protein that may play a role in cell adhesion, cell spreading and in the reorganization of the actin cytoskeleton. May inhibit cell growth. Regulates cranial neural crest migration. Acts together with prickle1 to control axial elongation. This chain is Testin, found in Xenopus tropicalis (Western clawed frog).